The primary structure comprises 900 residues: Aldos-2-ulose dehydratase (900 aa).

Residues 1–433 are dehydratase domain; it reads MYSKVFLKPH…NPSINVFLST (433 aa). Ascopyrone M is bound at residue tyrosine 35. The Mg(2+) site is built by aspartate 101, threonine 103, asparagine 105, phenylalanine 107, and aspartate 109. Tyrosine 116, methionine 120, histidine 155, histidine 215, histidine 295, and histidine 337 together coordinate ascopyrone M. Residue histidine 155 is the Proton acceptor of the active site. Zn(2+) is bound by residues histidine 215, histidine 295, histidine 337, aspartate 343, aspartate 345, aspartate 347, glutamate 349, and glutamate 351. Residues tyrosine 414, tyrosine 419, and alanine 627 each contribute to the ascopyrone M site. The isomerase domain stretch occupies residues 434–739; sequence GILAERLDEE…EFPGFETFST (306 aa). Residues alanine 627 and histidine 630 each contribute to the 1,5-anhydro-D-fructose site. Zn(2+) is bound by residues histidine 630, histidine 632, and glutamate 639. Ascopyrone M-binding residues include glutamate 639 and histidine 641. Histidine 641 is a 1,5-anhydro-D-fructose binding site. Histidine 709 is a Zn(2+) binding site. Tryptophan 726 provides a ligand contact to ascopyrone M. Tryptophan 726 serves as a coordination point for 1,5-anhydro-D-fructose.

In terms of assembly, homodimer. Requires Zn(2+) as cofactor.

It catalyses the reaction 1,5-anhydro-D-fructose = microthecin + H2O. The enzyme catalyses 1,5-anhydro-D-fructose = ascopyrone M + H2O. It carries out the reaction ascopyrone M = microthecin. The catalysed reaction is 2-dehydro-D-glucose = cortalcerone + H2O. The protein operates within carbohydrate metabolism; 1,5-anhydro-D-fructose degradation. Its function is as follows. A bifunctional enzyme which catalyzes the dehydration of anhydrofructose into ascopyrone M, and the isomerization of ascopyrone M into microthecin. To a lesser extent, can also act on 2-dehydro-D-glucopyranose (D-glucosone), leading to the antibiotic cortalcerone. This chain is Aldos-2-ulose dehydratase, found in Phanerodontia chrysosporium (White-rot fungus).